We begin with the raw amino-acid sequence, 98 residues long: NADH-ubiquinone oxidoreductase chain 4L (98 aa).

3 helical membrane passes run 2–22 (PSIS…MLMF), 29–49 (SLLC…LIIL), and 61–81 (ILLL…LVMI).

It belongs to the complex I subunit 4L family. Core subunit of respiratory chain NADH dehydrogenase (Complex I) which is composed of 45 different subunits.

The protein resides in the mitochondrion inner membrane. The enzyme catalyses a ubiquinone + NADH + 5 H(+)(in) = a ubiquinol + NAD(+) + 4 H(+)(out). In terms of biological role, core subunit of the mitochondrial membrane respiratory chain NADH dehydrogenase (Complex I) which catalyzes electron transfer from NADH through the respiratory chain, using ubiquinone as an electron acceptor. Part of the enzyme membrane arm which is embedded in the lipid bilayer and involved in proton translocation. This is NADH-ubiquinone oxidoreductase chain 4L (MT-ND4L) from Mirza coquereli (Coquerel's giant mouse lemur).